We begin with the raw amino-acid sequence, 233 residues long: Small ribosomal subunit protein uS2 (233 aa).

This sequence belongs to the universal ribosomal protein uS2 family.

This is Small ribosomal subunit protein uS2 from Bacillus cytotoxicus (strain DSM 22905 / CIP 110041 / 391-98 / NVH 391-98).